The sequence spans 567 residues: Urease subunit alpha (567 aa).

One can recognise a Urease domain in the interval 129 to 567 (GGIDTHIHWI…LPMAQRYFLF (439 aa)). Ni(2+)-binding residues include histidine 134, histidine 136, and lysine 217. Lysine 217 carries the N6-carboxylysine modification. Histidine 219 contacts substrate. Ni(2+) is bound by residues histidine 246 and histidine 272. Histidine 320 functions as the Proton donor in the catalytic mechanism. Aspartate 360 provides a ligand contact to Ni(2+).

Belongs to the metallo-dependent hydrolases superfamily. Urease alpha subunit family. Heterotrimer of UreA (gamma), UreB (beta) and UreC (alpha) subunits. Three heterotrimers associate to form the active enzyme. Ni cation serves as cofactor. Carboxylation allows a single lysine to coordinate two nickel ions.

The protein resides in the cytoplasm. It carries out the reaction urea + 2 H2O + H(+) = hydrogencarbonate + 2 NH4(+). It functions in the pathway nitrogen metabolism; urea degradation; CO(2) and NH(3) from urea (urease route): step 1/1. The polypeptide is Urease subunit alpha (Klebsiella pneumoniae (strain 342)).